We begin with the raw amino-acid sequence, 282 residues long: Shikimate dehydrogenase (NADP(+)) (282 aa).

Shikimate is bound by residues 15–17 (SKS) and threonine 62. Residue lysine 66 is the Proton acceptor of the active site. Shikimate contacts are provided by asparagine 87 and aspartate 103. Residues 127-131 (GAGGA), 151-156 (NRTHTK), and methionine 220 each bind NADP(+). Tyrosine 222 is a shikimate binding site. Glycine 244 contacts NADP(+).

It belongs to the shikimate dehydrogenase family. As to quaternary structure, homodimer.

The catalysed reaction is shikimate + NADP(+) = 3-dehydroshikimate + NADPH + H(+). It participates in metabolic intermediate biosynthesis; chorismate biosynthesis; chorismate from D-erythrose 4-phosphate and phosphoenolpyruvate: step 4/7. Functionally, involved in the biosynthesis of the chorismate, which leads to the biosynthesis of aromatic amino acids. Catalyzes the reversible NADPH linked reduction of 3-dehydroshikimate (DHSA) to yield shikimate (SA). This is Shikimate dehydrogenase (NADP(+)) from Shewanella baltica (strain OS223).